Consider the following 600-residue polypeptide: Probable methyltransferase PMT7 (600 aa).

Residues 1 to 15 are Cytoplasmic-facing; that stretch reads MGGGYVLFGSARSGQ. The chain crosses the membrane as a helical; Signal-anchor for type II membrane protein span at residues 16–36; it reads MIMVALVLMVGSFYAGSIFGN. The Lumenal portion of the chain corresponds to 37–600; the sequence is NSPIYISQPS…FCRKKFWAIL (564 aa). 9 N-linked (GlcNAc...) asparagine glycosylation sites follow: asparagine 49, asparagine 98, asparagine 110, asparagine 157, asparagine 200, asparagine 204, asparagine 334, asparagine 447, and asparagine 484.

It belongs to the methyltransferase superfamily.

Its subcellular location is the golgi apparatus membrane. The chain is Probable methyltransferase PMT7 from Arabidopsis thaliana (Mouse-ear cress).